Reading from the N-terminus, the 320-residue chain is Mitochondrial glutamate carrier 2 (320 aa).

3 Solcar repeats span residues 11–97, 105–215, and 224–313; these read LSIS…LRQL, RNLK…LNQL, and ASFT…GIGE. 3 helical membrane passes run 17-37, 66-86, and 110-128; these read LING…IDLA, FLGM…EKAI, and EMLA…TCPM. Ser-150 carries the phosphoserine modification. Transmembrane regions (helical) follow at residues 190–210, 230–250, and 293–313; these read GLGA…PLFA, FVAG…LDVL, and ALVI…GIGE.

Belongs to the mitochondrial carrier (TC 2.A.29) family.

It is found in the mitochondrion inner membrane. It carries out the reaction L-glutamate(in) + H(+)(in) = L-glutamate(out) + H(+)(out). In terms of biological role, responsible for the transport of glutamate from the cytosol into the mitochondrial matrix with the concomitant import of a proton (symport system). The protein is Mitochondrial glutamate carrier 2 (Slc25a18) of Mus musculus (Mouse).